Here is a 261-residue protein sequence, read N- to C-terminus: V-type proton ATPase subunit D (261 aa).

A Phosphoserine modification is found at S241.

Belongs to the V-ATPase D subunit family. V-ATPase is a heteromultimeric enzyme composed of a peripheral catalytic V1 complex (components A to H) attached to an integral membrane V0 proton pore complex (components: a, c, c'', d and e).

Its subcellular location is the vacuole membrane. Its function is as follows. Subunit of the peripheral V1 complex of vacuolar ATPase. V-ATPase is responsible for acidifying a variety of intracellular compartments in eukaryotic cells, thus providing most of the energy required for transport processes in the vacuolar system. The sequence is that of V-type proton ATPase subunit D (VHA-D) from Arabidopsis thaliana (Mouse-ear cress).